The following is a 218-amino-acid chain: Small ribosomal subunit protein uS3 (218 aa).

Residues 38-106 form the KH type-2 domain; the sequence is IRKFIATKLA…RVHINIVEIK (69 aa).

This sequence belongs to the universal ribosomal protein uS3 family. Part of the 30S ribosomal subunit. Forms a tight complex with proteins S10 and S14.

In terms of biological role, binds the lower part of the 30S subunit head. Binds mRNA in the 70S ribosome, positioning it for translation. This chain is Small ribosomal subunit protein uS3, found in Enterococcus faecalis (strain ATCC 700802 / V583).